The following is a 737-amino-acid chain: Amino-acid acetyltransferase, mitochondrial (737 aa).

The N-terminal 47 residues, 1–47, are a transit peptide targeting the mitochondrion; sequence MSRSTVLGWCTQSCRLLQKHDHSFSFPTFNGSPPLKKRRFCDSAAPA. The segment at 43–78 is disordered; the sequence is SAAPAAPRPSIHRPSEYIPHSKSGGEAPQDLGHKAR. The N-acetyltransferase domain occupies 558 to 727; that stretch reads GEPALTLDDP…YEGVCRAIEP (170 aa).

Belongs to the acetyltransferase family.

The protein resides in the mitochondrion. The catalysed reaction is L-glutamate + acetyl-CoA = N-acetyl-L-glutamate + CoA + H(+). Its pathway is amino-acid biosynthesis; L-arginine biosynthesis; N(2)-acetyl-L-ornithine from L-glutamate: step 1/4. N-acetylglutamate synthase involved in arginine biosynthesis. In Coccidioides immitis (strain RS) (Valley fever fungus), this protein is Amino-acid acetyltransferase, mitochondrial (ARG2).